The chain runs to 350 residues: Methionine import ATP-binding protein MetN (350 aa).

Positions 9–245 constitute an ABC transporter domain; that stretch reads LKDVDVEFHG…PQQQLTKDFI (237 aa). 43–50 serves as a coordination point for ATP; the sequence is GYSGAGKS.

This sequence belongs to the ABC transporter superfamily. Methionine importer (TC 3.A.1.24) family. In terms of assembly, the complex is composed of two ATP-binding proteins (MetN), two transmembrane proteins (MetI) and a solute-binding protein (MetQ).

It localises to the cell membrane. The enzyme catalyses L-methionine(out) + ATP + H2O = L-methionine(in) + ADP + phosphate + H(+). It catalyses the reaction D-methionine(out) + ATP + H2O = D-methionine(in) + ADP + phosphate + H(+). Part of the ABC transporter complex MetNIQ involved in methionine import. Responsible for energy coupling to the transport system. The sequence is that of Methionine import ATP-binding protein MetN from Lacticaseibacillus paracasei (strain ATCC 334 / BCRC 17002 / CCUG 31169 / CIP 107868 / KCTC 3260 / NRRL B-441) (Lactobacillus paracasei).